The primary structure comprises 381 residues: Protein pelota homolog (381 aa).

Belongs to the eukaryotic release factor 1 family. Pelota subfamily. In terms of assembly, component of the Pelota-HBS1L complex, also named Dom34-Hbs1 complex, composed of pelo-1 and hbs-1. It depends on a divalent metal cation as a cofactor.

Its subcellular location is the cytoplasm. The protein resides in the nucleus. Its function is as follows. Component of the Pelota-HBS1L complex, a complex that recognizes stalled ribosomes and triggers the No-Go Decay (NGD) pathway. In the Pelota-HBS1L complex, pelo-1 recognizes ribosomes stalled at the 3' end of an mRNA and engages stalled ribosomes by destabilizing mRNA in the mRNA channel. Following ribosome-binding, the Pelota-HBS1L complex promotes the disassembly of stalled ribosomes, followed by degradation of damaged mRNAs as part of the NGD pathway. This Caenorhabditis elegans protein is Protein pelota homolog.